The following is a 207-amino-acid chain: Ras-related protein RABH1e (207 aa).

A GTP-binding site is contributed by 16 to 23; that stretch reads GDQSVGKT. Residues 38–46 carry the Effector region motif; that stretch reads YQATIGIDF. Residues 64 to 68, 122 to 125, and 152 to 153 each bind GTP; these read DTAGQ, NKTD, and SA. S-geranylgeranyl cysteine attachment occurs at residues C205 and C207. Position 207 is a cysteine methyl ester (C207).

Belongs to the small GTPase superfamily. Rab family.

Its subcellular location is the golgi apparatus membrane. In terms of biological role, protein transport. Regulator of membrane traffic from the Golgi apparatus towards the endoplasmic reticulum (ER). The sequence is that of Ras-related protein RABH1e (RABH1E) from Arabidopsis thaliana (Mouse-ear cress).